We begin with the raw amino-acid sequence, 305 residues long: Olfactory receptor 4F5 (305 aa).

The Extracellular portion of the chain corresponds to 1-18 (MVTEFIFLGLSDSQELQT). A helical membrane pass occupies residues 19–42 (FLFMLFFVFYGGIVFGNLLIVITV). Over 43–50 (VSDSHLHS) the chain is Cytoplasmic. The helical transmembrane segment at 51 to 72 (PMYFLLANLSLIDLSLSSVTAP) threads the bilayer. Residues 73-93 (KMITDFFSQRKVISFKGCLVQ) lie on the Extracellular side of the membrane. C90 and C182 are disulfide-bonded. A helical transmembrane segment spans residues 94–113 (IFLLHFFGGSEMVILIAMGF). At 114–132 (DRYIAICKPLHYTTIMCGN) the chain is on the cytoplasmic side. The helical transmembrane segment at 133 to 151 (ACVGIMAVTWGIGFLHSVS) threads the bilayer. Residues 152-188 (QLAFAVHLLFCGPNEVDSFYCDLPRVIKLACTDTYRL) are Extracellular-facing. A helical transmembrane segment spans residues 189-212 (DIMVIANSGVLTVCSFVLLIISYT). The Cytoplasmic segment spans residues 213–228 (IILMTIQHRPLDKSSK). Residues 229–251 (ALSTLTAHITVVLLFFGPCVFIY) form a helical membrane-spanning segment. At 252-262 (AWPFPIKSLDK) the chain is on the extracellular side. Residues 263 to 282 (FLAVFYSVITPLLNPIIYTL) form a helical membrane-spanning segment. The Cytoplasmic portion of the chain corresponds to 283-305 (RNKDMKTAIRQLRKWDAHSSVKF).

This sequence belongs to the G-protein coupled receptor 1 family.

The protein localises to the cell membrane. Its function is as follows. Odorant receptor. This is Olfactory receptor 4F5 (OR4F5) from Homo sapiens (Human).